The following is a 553-amino-acid chain: Telomere repeat-binding protein 2 (553 aa).

The disordered stretch occupies residues 147–170 (SSTEVGACGNGSPNESRDDVNLFS). The 80-residue stretch at 285–364 (VKLRIKSFRV…HLDSLGFSLE (80 aa)) folds into the Ubiquitin-like domain. The tract at residues 394 to 413 (ALDSSHEPEPSPADSFGKLG) is disordered. The 60-residue stretch at 448–507 (AQRRIRRPFSVTEVEALVQAVEKLGTGRWRDVKVRAFEDADHRTYVDLKDKWKTLVHTAR) folds into the HTH myb-type domain. The segment at residues 476–503 (WRDVKVRAFEDADHRTYVDLKDKWKTLV) is a DNA-binding region (H-T-H motif).

As to quaternary structure, homodimer and heterodimer with TRP1. Interacts with SNL1. As to expression, expressed ubiquitously. Highest expression in flowers and leaves.

The protein localises to the nucleus. Its function is as follows. Binds specifically to the plant telomeric double-stranded DNA sequences. At least 2 repeats of telomeric sequences are required for binding. Induces DNA bending. In Arabidopsis thaliana (Mouse-ear cress), this protein is Telomere repeat-binding protein 2 (TRP2).